The following is a 316-amino-acid chain: 4-hydroxy-3-methylbut-2-enyl diphosphate reductase (316 aa).

[4Fe-4S] cluster is bound at residue Cys-12. (2E)-4-hydroxy-3-methylbut-2-enyl diphosphate-binding residues include His-43 and His-81. Residues His-43 and His-81 each coordinate dimethylallyl diphosphate. Isopentenyl diphosphate contacts are provided by His-43 and His-81. Cys-103 provides a ligand contact to [4Fe-4S] cluster. Position 131 (His-131) interacts with (2E)-4-hydroxy-3-methylbut-2-enyl diphosphate. Residue His-131 coordinates dimethylallyl diphosphate. His-131 is a binding site for isopentenyl diphosphate. Catalysis depends on Glu-133, which acts as the Proton donor. Thr-170 provides a ligand contact to (2E)-4-hydroxy-3-methylbut-2-enyl diphosphate. Cys-198 contacts [4Fe-4S] cluster. Ser-226, Asn-228, and Ser-271 together coordinate (2E)-4-hydroxy-3-methylbut-2-enyl diphosphate. The dimethylallyl diphosphate site is built by Ser-226, Asn-228, and Ser-271. Ser-226, Asn-228, and Ser-271 together coordinate isopentenyl diphosphate.

This sequence belongs to the IspH family. The cofactor is [4Fe-4S] cluster.

It carries out the reaction isopentenyl diphosphate + 2 oxidized [2Fe-2S]-[ferredoxin] + H2O = (2E)-4-hydroxy-3-methylbut-2-enyl diphosphate + 2 reduced [2Fe-2S]-[ferredoxin] + 2 H(+). The catalysed reaction is dimethylallyl diphosphate + 2 oxidized [2Fe-2S]-[ferredoxin] + H2O = (2E)-4-hydroxy-3-methylbut-2-enyl diphosphate + 2 reduced [2Fe-2S]-[ferredoxin] + 2 H(+). It participates in isoprenoid biosynthesis; dimethylallyl diphosphate biosynthesis; dimethylallyl diphosphate from (2E)-4-hydroxy-3-methylbutenyl diphosphate: step 1/1. Its pathway is isoprenoid biosynthesis; isopentenyl diphosphate biosynthesis via DXP pathway; isopentenyl diphosphate from 1-deoxy-D-xylulose 5-phosphate: step 6/6. In terms of biological role, catalyzes the conversion of 1-hydroxy-2-methyl-2-(E)-butenyl 4-diphosphate (HMBPP) into a mixture of isopentenyl diphosphate (IPP) and dimethylallyl diphosphate (DMAPP). Acts in the terminal step of the DOXP/MEP pathway for isoprenoid precursor biosynthesis. The chain is 4-hydroxy-3-methylbut-2-enyl diphosphate reductase from Geobacillus thermodenitrificans (strain NG80-2).